The primary structure comprises 106 residues: ATP-dependent Clp protease adapter protein ClpS (106 aa).

The protein belongs to the ClpS family. Binds to the N-terminal domain of the chaperone ClpA.

Involved in the modulation of the specificity of the ClpAP-mediated ATP-dependent protein degradation. In Erwinia tasmaniensis (strain DSM 17950 / CFBP 7177 / CIP 109463 / NCPPB 4357 / Et1/99), this protein is ATP-dependent Clp protease adapter protein ClpS.